The following is a 274-amino-acid chain: Envelope glycoprotein L (274 aa).

Residues 1–21 (MMPLLLLILLSTRNLLGAAQS) form the signal peptide. Positions 51 to 251 (VEHKCREALA…RSYRDRFPAV (201 aa)) constitute a gL betaherpesvirus-type domain. Cysteines 156 and 161 form a disulfide.

This sequence belongs to the herpesviridae glycoprotein L (gL) family. Betaherpesvirinae gL subfamily. As to quaternary structure, interacts with glycoprotein H (gH); this interaction is necessary for the correct processing and cell surface expression of gH.

The protein resides in the virion membrane. The protein localises to the host cell membrane. It is found in the host Golgi apparatus. Its subcellular location is the host trans-Golgi network. Its function is as follows. The heterodimer glycoprotein H-glycoprotein L is required for the fusion of viral and plasma membranes leading to virus entry into the host cell. Acts as a functional inhibitor of gH and maintains gH in an inhibited form. Upon binding to host integrins, gL dissociates from gH leading to activation of the viral fusion glycoproteins gB and gH. This is Envelope glycoprotein L from Mus musculus (Mouse).